The chain runs to 86 residues: uncharacterized protein (86 aa).

A helical transmembrane segment spans residues 12-32 (IIFIFAIIIIVVLCVITYLYL).

It is found in the membrane. This is an uncharacterized protein from Escherichia coli (strain K12).